A 375-amino-acid polypeptide reads, in one-letter code: Alanine racemase, catabolic (375 aa).

Lys38 (proton acceptor; specific for D-alanine) is an active-site residue. N6-(pyridoxal phosphate)lysine is present on Lys38. Tyr269 (proton acceptor; specific for L-alanine) is an active-site residue.

It belongs to the alanine racemase family. The cofactor is pyridoxal 5'-phosphate.

It carries out the reaction L-alanine = D-alanine. It functions in the pathway amino-acid biosynthesis; D-alanine biosynthesis; D-alanine from L-alanine: step 1/1. This Schizosaccharomyces pombe (strain 972 / ATCC 24843) (Fission yeast) protein is Alanine racemase, catabolic (alr1).